Consider the following 134-residue polypeptide: Bet1-like protein At1g29060 (134 aa).

Residues 1–12 show a composition bias toward gly residues; the sequence is MASNRGAGGSLY. The disordered stretch occupies residues 1–31; sequence MASNRGAGGSLYGGADPYRSREGLSTRNASG. Residues 1–110 lie on the Cytoplasmic side of the membrane; it reads MASNRGAGGS…LSIIRSGNNH (110 aa). The 63-residue stretch at 40-102 folds into the t-SNARE coiled-coil homology domain; sequence DPMHSDLDDE…KNNIRKLNLS (63 aa). A helical; Anchor for type IV membrane protein membrane pass occupies residues 111–131; that stretch reads IMHVVLFALLLFFILYMWSKM. Residues 132-134 are Vesicular-facing; that stretch reads FKR.

This sequence belongs to the BET1 family.

It is found in the golgi apparatus membrane. The protein localises to the endoplasmic reticulum membrane. Functionally, required for vesicular transport from the ER to the Golgi complex. Functions as a SNARE associated with ER-derived vesicles. The chain is Bet1-like protein At1g29060 from Arabidopsis thaliana (Mouse-ear cress).